The chain runs to 450 residues: Putative zinc metalloprotease PA3649 (450 aa).

H21 is a binding site for Zn(2+). Residue E22 is part of the active site. H25 lines the Zn(2+) pocket. The chain crosses the membrane as a helical span at residues 97–119; it reads IAIVAAGPIANFLLAILFFWVVA. Residues 199–291 form the PDZ domain; that stretch reads GWLKGEDNPD…VLDVALELAV (93 aa). A helical transmembrane segment spans residues 425–444; it reads AWGMQIGISLVVGVMLLALV.

Belongs to the peptidase M50B family. The cofactor is Zn(2+).

It is found in the cell inner membrane. The polypeptide is Putative zinc metalloprotease PA3649 (Pseudomonas aeruginosa (strain ATCC 15692 / DSM 22644 / CIP 104116 / JCM 14847 / LMG 12228 / 1C / PRS 101 / PAO1)).